A 302-amino-acid chain; its full sequence is Coiled-coil domain-containing protein 2 (302 aa).

The N-terminal stretch at 1 to 22 (MKNFGLLVVCLSLATLVIPSDG) is a signal peptide. Positions 198–234 (FADAMEKKAEALENAAEAAAEYISDQSEEVDDLSEEV) form a coiled coil. The tract at residues 221 to 257 (SDQSEEVDDLSEEVLDDDSDENDSTSSESEVEDSDVD) is disordered. Positions 223–257 (QSEEVDDLSEEVLDDDSDENDSTSSESEVEDSDVD) are enriched in acidic residues. Residue asparagine 242 is glycosylated (N-linked (GlcNAc...) asparagine).

Component of the acid-insoluble organic matrix of calcified layers of the shell (at protein level).

It localises to the secreted. This Lottia gigantea (Giant owl limpet) protein is Coiled-coil domain-containing protein 2.